Consider the following 180-residue polypeptide: Methionine-R-sulfoxide reductase B2, mitochondrial (180 aa).

The transit peptide at 1–41 (MSRFLVRLSTVVSKGATGKSVLPQKRIFAGIRLISSSTGLQ) directs the protein to the mitochondrion. The MsrB domain occupies 49–178 (STDWQRKLSP…NSVALNFKPR (130 aa)). Cys-88, Cys-91, Cys-144, and Cys-147 together coordinate Zn(2+). The Nucleophile role is filled by Cys-167.

This sequence belongs to the MsrB Met sulfoxide reductase family. Zn(2+) serves as cofactor.

Its subcellular location is the mitochondrion. It carries out the reaction L-methionyl-[protein] + [thioredoxin]-disulfide + H2O = L-methionyl-(R)-S-oxide-[protein] + [thioredoxin]-dithiol. The catalysed reaction is [thioredoxin]-disulfide + L-methionine + H2O = L-methionine (R)-S-oxide + [thioredoxin]-dithiol. In terms of biological role, methionine-sulfoxide reductase that specifically reduces methionine (R)-sulfoxide back to methionine. While in many cases, methionine oxidation is the result of random oxidation following oxidative stress, methionine oxidation is also a post-translational modification that takes place on specific residue. Upon oxidative stress, may play a role in the preservation of mitochondrial integrity by decreasing the intracellular reactive oxygen species build-up through its scavenging role, hence contributing to cell survival and protein maintenance. In Danio rerio (Zebrafish), this protein is Methionine-R-sulfoxide reductase B2, mitochondrial (msrb2).